The following is a 730-amino-acid chain: ATP-binding cassette sub-family D member 1 (730 aa).

4 helical membrane-spanning segments follow: residues 24-44 (AFSY…VTIP), 137-157 (FCLI…GALV), 169-189 (ALVL…NSMI), and 276-296 (ANII…AHIL). The ABC transmembrane type-1 domain maps to 136–373 (TFCLISRTFL…WFIMLEQFFM (238 aa)). The 223-residue stretch at 505–727 (ISLRAVPVVT…MNSDEEQKGQ (223 aa)) folds into the ABC transporter domain. Residue 538–545 (GPNGCGKS) coordinates ATP.

Belongs to the ABC transporter superfamily. ABCD family. Peroxisomal fatty acyl CoA transporter (TC 3.A.1.203) subfamily.

It localises to the peroxisome membrane. The enzyme catalyses an acyl-CoA(out) + ATP + H2O = an acyl-CoA(in) + ADP + phosphate + H(+). Plays a role in the transport of free very-long-chain fatty acids (VLCFAs) as well as their CoA-esters across the peroxisomal membrane by acting as an ATP-specific binding subunit releasing ADP after ATP hydrolysis. Thus, plays a role in regulation of VLCFAs and energy metabolism namely, in the degradation and biosynthesis of fatty acids by beta-oxidation, mitochondrial function and microsomal fatty acid elongation. This Drosophila melanogaster (Fruit fly) protein is ATP-binding cassette sub-family D member 1.